Consider the following 1108-residue polypeptide: Serine/threonine-protein kinase AKL1 (1108 aa).

At serine 2 the chain carries N-acetylserine. Residue serine 10 is modified to Phosphoserine. In terms of domain architecture, Protein kinase spans 35 to 319; that stretch reads VEVVNYLAEG…IYQVLYHLCE (285 aa). ATP contacts are provided by residues 41–49 and lysine 70; that span reads LAEGGFAQI. Aspartate 181 functions as the Proton acceptor in the catalytic mechanism. Residues 405-466 form a disordered region; sequence IPSQNVGQEL…QSPGIEDKSI (62 aa). The residue at position 407 (serine 407) is a Phosphoserine. Basic and acidic residues predominate over residues 419–435; that stretch reads ESQSDQRKSTLSEDKSS. The segment covering 436–449 has biased composition (low complexity); the sequence is RTTSNANSSGTANN. Threonine 471 carries the post-translational modification Phosphothreonine. Positions 493–513 are enriched in polar residues; that stretch reads KQSSDPTISEQSPRLNTQSLP. The tract at residues 493 to 534 is disordered; that stretch reads KQSSDPTISEQSPRLNTQSLPQRQKSTSSYSSGGRSMKSTSY. Residue serine 504 is modified to Phosphoserine. The segment covering 514–534 has biased composition (low complexity); the sequence is QRQKSTSSYSSGGRSMKSTSY. Phosphoserine is present on residues serine 541 and serine 574. The segment covering 590–629 has biased composition (low complexity); it reads QQQGQRYQQAQNQTGTQGNTFPDESQYQSRVEQQQQQQDQ. 2 disordered regions span residues 590 to 663 and 765 to 791; these read QQQG…GDSG and EDMRNAQGGEPPILAGNSANEPMHSSS. The segment covering 781-791 has biased composition (polar residues); the sequence is NSANEPMHSSS. Residue serine 801 is modified to Phosphoserine. The tract at residues 807–838 is disordered; sequence AGKQSFQDTNEPQTGGIEDAGGSGTIKGSNNN. Residues 810-819 show a composition bias toward polar residues; that stretch reads QSFQDTNEPQ. Serine 846 is subject to Phosphoserine. The segment at 858 to 1108 is disordered; it reads GAAVSSFSSS…SFFSVFRSEK (251 aa). Residues 859 to 872 show a composition bias toward low complexity; it reads AAVSSFSSSSSSAS. The span at 910–934 shows a compositional bias: basic and acidic residues; it reads DDARRGKTAERRPLHNERGHKDQAR. Residues 935-976 show a composition bias toward polar residues; it reads SSDASKSNQFKSKDFSSVSTRQPRQSLDLNFQEVNLSSPTLT. Serine 953 and serine 960 each carry phosphoserine. The segment covering 1006–1048 has biased composition (basic and acidic residues); the sequence is ENKRHSTGHELSTRSNGKHETHRTGSKQRHDLERYRHSKDKDS. Residues lysine 1008 and lysine 1046 each participate in a glycyl lysine isopeptide (Lys-Gly) (interchain with G-Cter in ubiquitin) cross-link. Serine 1048 is modified (phosphoserine). Over residues 1049–1060 the composition is skewed to low complexity; it reads NSSITISTSTPS. The segment covering 1071-1082 has biased composition (basic and acidic residues); it reads QSLDLERVRREA. The residue at position 1072 (serine 1072) is a Phosphoserine.

It belongs to the protein kinase superfamily. Ser/Thr protein kinase family.

The enzyme catalyses L-seryl-[protein] + ATP = O-phospho-L-seryl-[protein] + ADP + H(+). It carries out the reaction L-threonyl-[protein] + ATP = O-phospho-L-threonyl-[protein] + ADP + H(+). Its function is as follows. Phosphorylates SCD5. This Saccharomyces cerevisiae (strain ATCC 204508 / S288c) (Baker's yeast) protein is Serine/threonine-protein kinase AKL1 (AKL1).